The following is a 151-amino-acid chain: Regulatory protein RecX (151 aa).

The protein belongs to the RecX family.

The protein localises to the cytoplasm. Functionally, modulates RecA activity. This is Regulatory protein RecX from Chlorobium phaeobacteroides (strain BS1).